The sequence spans 398 residues: 1-deoxy-D-xylulose 5-phosphate reductoisomerase (398 aa).

NADPH-binding residues include Thr-11, Gly-12, Ser-13, Ile-14, Arg-38, Asn-39, and Asn-125. Residue Lys-126 coordinates 1-deoxy-D-xylulose 5-phosphate. Glu-127 is a binding site for NADPH. Asp-151 contributes to the Mn(2+) binding site. Residues Ser-152, Glu-153, Ser-179, and His-202 each coordinate 1-deoxy-D-xylulose 5-phosphate. Glu-153 provides a ligand contact to Mn(2+). Gly-208 serves as a coordination point for NADPH. Positions 215, 220, 221, and 224 each coordinate 1-deoxy-D-xylulose 5-phosphate. A Mn(2+)-binding site is contributed by Glu-224.

This sequence belongs to the DXR family. The cofactor is Mg(2+). Requires Mn(2+) as cofactor.

It carries out the reaction 2-C-methyl-D-erythritol 4-phosphate + NADP(+) = 1-deoxy-D-xylulose 5-phosphate + NADPH + H(+). The protein operates within isoprenoid biosynthesis; isopentenyl diphosphate biosynthesis via DXP pathway; isopentenyl diphosphate from 1-deoxy-D-xylulose 5-phosphate: step 1/6. Catalyzes the NADPH-dependent rearrangement and reduction of 1-deoxy-D-xylulose-5-phosphate (DXP) to 2-C-methyl-D-erythritol 4-phosphate (MEP). This chain is 1-deoxy-D-xylulose 5-phosphate reductoisomerase, found in Burkholderia pseudomallei (strain 1106a).